The following is a 146-amino-acid chain: MWPAPCSVGRLLIFFMCSSSGYVVQGCGPSPGARTTLGSPLSLWSIKTPSHIFCTRRAINLGFPSPPLVQLIFWSLNAGLDLYLCLISSCGFSQVFWPVEAFCSFSLSFFALALSHKFVICRLDQHIFSGFTKSLKNLPPCHRTDI.

The signal sequence occupies residues 1 to 26 (MWPAPCSVGRLLIFFMCSSSGYVVQG). Topologically, residues 27–66 (CGPSPGARTTLGSPLSLWSIKTPSHIFCTRRAINLGFPSP) are extracellular. A helical membrane pass occupies residues 67–87 (PLVQLIFWSLNAGLDLYLCLI). Residues 88–94 (SSCGFSQ) lie on the Cytoplasmic side of the membrane. The helical transmembrane segment at 95–115 (VFWPVEAFCSFSLSFFALALS) threads the bilayer. Over 116–146 (HKFVICRLDQHIFSGFTKSLKNLPPCHRTDI) the chain is Extracellular.

In terms of assembly, homodimer. Interacts with DNAJB4. As to expression, expressed in brain with higher detection in neurons than astrocytes. Decreased expression in Alzheimer brains. Detected at protein level in brain and cervix.

The protein localises to the membrane. Its function is as follows. Promotes neuronal cells survival to stress conditions. This chain is Stress-responsive DNAJB4-interacting membrane protein 1 (SDIM1), found in Homo sapiens (Human).